Consider the following 915-residue polypeptide: Transferrin-binding protein A (915 aa).

Residues 1–24 (MQQQHLFRLNILCLSLMTALPAYA) form the signal peptide. A TonB box motif is present at residues 38 to 45 (DTIQVKAK). The TBDR plug domain occupies 51 to 176 (RDNEVTGLGK…LAGSVAFQTK (126 aa)). In terms of domain architecture, TBDR beta-barrel spans 187-915 (QWGIQSKTAY…NYTFSLEMKF (729 aa)). The segment covering 526-540 (LKTPPQNNGKKTSPN) has biased composition (polar residues). The interval 526–545 (LKTPPQNNGKKTSPNGREKN) is disordered. The short motif at 898–915 (NRYAAPGRNYTFSLEMKF) is the TonB C-terminal box element.

This sequence belongs to the TonB-dependent receptor family. Binds both human apo- and holo-transferrin (TF), via the TF C-terminus. Forms a large complex with TF and TbpB.

The protein resides in the cell outer membrane. Functionally, neisseria acquires iron by extracting it from serum transferrin (TF) in its human host. Acts as a TF receptor and is required for TF utilization. Binds both apo- and holo-TF, via the TF C-terminus. The polypeptide is Transferrin-binding protein A (Neisseria gonorrhoeae).